The following is a 98-amino-acid chain: NADH-ubiquinone oxidoreductase chain 4L (98 aa).

3 consecutive transmembrane segments (helical) span residues 1–21 (MSLV…GLLM), 29–49 (ALLC…LTIL), and 61–81 (IILL…LVTI).

The protein belongs to the complex I subunit 4L family. As to quaternary structure, core subunit of respiratory chain NADH dehydrogenase (Complex I) which is composed of 45 different subunits.

It is found in the mitochondrion inner membrane. It catalyses the reaction a ubiquinone + NADH + 5 H(+)(in) = a ubiquinol + NAD(+) + 4 H(+)(out). Its function is as follows. Core subunit of the mitochondrial membrane respiratory chain NADH dehydrogenase (Complex I) which catalyzes electron transfer from NADH through the respiratory chain, using ubiquinone as an electron acceptor. Part of the enzyme membrane arm which is embedded in the lipid bilayer and involved in proton translocation. The sequence is that of NADH-ubiquinone oxidoreductase chain 4L (MT-ND4L) from Ziphius cavirostris (Cuvier's beaked whale).